An 811-amino-acid chain; its full sequence is Lysine-specific histone demethylase 1 homolog 3 (811 aa).

Positions 1–10 are enriched in pro residues; the sequence is MSDQPPPYTP. Residues 1–79 are disordered; that stretch reads MSDQPPPYTP…PSAQPPPRAS (79 aa). Residues 44–55 are compositionally biased toward basic residues; it reads NKRKRTGFRRKL. Residues 56-71 show a composition bias toward low complexity; that stretch reads PSGSPAAPVAVAASPS. Residues 88–189 enclose the SWIRM domain; the sequence is NREPTAEAVT…FGVAPAIKER (102 aa). Glutamate 227, arginine 229, arginine 235, and glutamate 609 together coordinate FAD. The disordered stretch occupies residues 790 to 811; it reads RNSSRTKTRPSKLKIGIPKSKS.

The protein belongs to the flavin monoamine oxidase family. FAD is required as a cofactor.

In terms of biological role, probable histone demethylase. The sequence is that of Lysine-specific histone demethylase 1 homolog 3 from Oryza sativa subsp. japonica (Rice).